A 1458-amino-acid polypeptide reads, in one-letter code: RNA-directed RNA polymerase P1 (1458 aa).

Positions 148-168 are disordered; that stretch reads LSQDDRDEKGNDNREEEDVKN. The region spanning 686–894 is the RdRp catalytic domain; that stretch reads VGIGFATIYQ…KTVISHISGE (209 aa). Residues 971–993 form a disordered region; that stretch reads DESIENKPNRRGSKAKARSTKTN. Basic residues predominate over residues 979-989; that stretch reads NRRGSKAKARS.

This sequence belongs to the reoviridae RNA-directed RNA polymerase family.

The protein resides in the virion. It localises to the host cytoplasm. The enzyme catalyses RNA(n) + a ribonucleoside 5'-triphosphate = RNA(n+1) + diphosphate. RNA-directed RNA polymerase that is involved in both transcription and genome replication. Together with the capping enzyme P5 and protein P7, forms an enzyme complex positioned near the channels situated at each of the five-fold vertices of the core. This Nephotettix cincticeps (Green rice leafhopper) protein is RNA-directed RNA polymerase P1.